An 84-amino-acid polypeptide reads, in one-letter code: Beta-defensin 119 (84 aa).

An N-terminal signal peptide occupies residues 1–21 (MKLLYLFLAILLAIEEPVISG). Cystine bridges form between C35/C49 and C39/C56.

Belongs to the beta-defensin family.

The protein localises to the secreted. Its function is as follows. Has antibacterial activity. This is Beta-defensin 119 (DEFB119) from Pan troglodytes (Chimpanzee).